Here is a 361-residue protein sequence, read N- to C-terminus: uncharacterized protein (361 aa).

The residue at position 12 (threonine 12) is a Phosphothreonine.

The protein localises to the cytoplasm. It is found in the nucleus. This is an uncharacterized protein from Schizosaccharomyces pombe (strain 972 / ATCC 24843) (Fission yeast).